We begin with the raw amino-acid sequence, 177 residues long: CASP-like protein 2U1 (177 aa).

The helical transmembrane segment at 1 to 21 threads the bilayer; that stretch reads MVLRIVASLLSIAALVLMAKD. At 22 to 48 the chain is on the cytoplasmic side; that stretch reads KQVVYLNLAGEELTLEAKHSYVEAFVY. Residues 49-69 traverse the membrane as a helical segment; that stretch reads LVYSNGLVAIYCFLLVFALVF. At 70–80 the chain is on the extracellular side; that stretch reads RLIDKAGCGKS. A helical transmembrane segment spans residues 81-101; sequence AAWIIFLLDQGLAYVLLAAAA. Residues 102 to 131 lie on the Cytoplasmic side of the membrane; the sequence is ASTEVAYVAKRGNNKVGWSEVCSTFGHFCN. Residues 132 to 152 form a helical membrane-spanning segment; sequence LVGVSIVITFISVLAMATLSV. At 153–177 the chain is on the extracellular side; sequence MSARRLFKTYGPERKQISSNDAPAI.

This sequence belongs to the Casparian strip membrane proteins (CASP) family. In terms of assembly, homodimer and heterodimers.

Its subcellular location is the cell membrane. The sequence is that of CASP-like protein 2U1 from Osmunda lancea (Fern).